The following is a 383-amino-acid chain: MPVEIPADSVGLVTPQTVTFSAPLELECGRSLPGYTLTYETYGTLNAQRSNAILLCHALSGDHHAAGYHSMDDRKPGWWEHLLGPGKAMDTERFFFVCANFIGSCKGSTGPASTNPETGAPWGLDFPMVTVRDWVKTQAELADYLGIEQWAAVVGGSLGGMQVMQWSMDYPERLRHAVVIAAAPKLTAQNIAFNEVCRQAIMTDPEFYNGRYYAHNTKPRRGLSLARMIGHITYLSDNAMRTKFGRDTRGGKAFSFGFDVDFEVESYLRYQGSSFVERFDANSYLYITKALDYFDPASTWGGNLAEAFASTRANFLVISFSSDWRFSPERSREIVQALYTCNRDVSYAEIEAEHGHDSFLMPIPQYVAVLSTYLGRVAEEIGA.

In terms of domain architecture, AB hydrolase-1 spans 51 to 360; sequence NAILLCHALS…EAEHGHDSFL (310 aa). Residue serine 157 is the Nucleophile of the active site. Substrate is bound at residue arginine 227. Residues aspartate 323 and histidine 356 contribute to the active site. Residue aspartate 357 participates in substrate binding.

It belongs to the AB hydrolase superfamily. MetX family. Homodimer.

It localises to the cytoplasm. It carries out the reaction L-homoserine + succinyl-CoA = O-succinyl-L-homoserine + CoA. It participates in amino-acid biosynthesis; L-methionine biosynthesis via de novo pathway; O-succinyl-L-homoserine from L-homoserine: step 1/1. Functionally, transfers a succinyl group from succinyl-CoA to L-homoserine, forming succinyl-L-homoserine. In Acidithiobacillus ferrooxidans (strain ATCC 23270 / DSM 14882 / CIP 104768 / NCIMB 8455) (Ferrobacillus ferrooxidans (strain ATCC 23270)), this protein is Homoserine O-succinyltransferase.